The sequence spans 99 residues: Aspartyl/glutamyl-tRNA(Asn/Gln) amidotransferase subunit C (99 aa).

This sequence belongs to the GatC family. Heterotrimer of A, B and C subunits.

The catalysed reaction is L-glutamyl-tRNA(Gln) + L-glutamine + ATP + H2O = L-glutaminyl-tRNA(Gln) + L-glutamate + ADP + phosphate + H(+). It catalyses the reaction L-aspartyl-tRNA(Asn) + L-glutamine + ATP + H2O = L-asparaginyl-tRNA(Asn) + L-glutamate + ADP + phosphate + 2 H(+). Its function is as follows. Allows the formation of correctly charged Asn-tRNA(Asn) or Gln-tRNA(Gln) through the transamidation of misacylated Asp-tRNA(Asn) or Glu-tRNA(Gln) in organisms which lack either or both of asparaginyl-tRNA or glutaminyl-tRNA synthetases. The reaction takes place in the presence of glutamine and ATP through an activated phospho-Asp-tRNA(Asn) or phospho-Glu-tRNA(Gln). The sequence is that of Aspartyl/glutamyl-tRNA(Asn/Gln) amidotransferase subunit C from Paraburkholderia xenovorans (strain LB400).